Here is a 245-residue protein sequence, read N- to C-terminus: Cytochrome P450 CYP82H23 (245 aa).

Belongs to the cytochrome P450 family. Heme is required as a cofactor.

Its function is as follows. Probable heme-thiolate monooxygenase. The chain is Cytochrome P450 CYP82H23 from Panax ginseng (Korean ginseng).